A 335-amino-acid chain; its full sequence is HTH-type transcriptional regulator RipA (335 aa).

In terms of domain architecture, HTH araC/xylS-type spans 119-216 (RKVAQKLIAY…GDTPSSFTSP (98 aa)). 2 consecutive DNA-binding regions (H-T-H motif) follow at residues 136 to 157 (LEFA…VAST) and 183 to 206 (IGQV…KRHT).

In terms of biological role, under iron limitation, represses the acn (aconitase), catA (catechol 1,2 dioxygenase), leuCD (isopropylmalate dehydratase), narKGHJI (nitrite/nitrate transporter and nitrate reductase), sdhCAB (succinate dehydrogenase), pta (phosphotransacetylase) and katA (catalase) genes. This Corynebacterium diphtheriae (strain ATCC 700971 / NCTC 13129 / Biotype gravis) protein is HTH-type transcriptional regulator RipA.